The sequence spans 2454 residues: Probable serine/threonine-protein kinase DDB_G0277071 (2454 aa).

The segment covering 31–51 has biased composition (low complexity); that stretch reads TSSLTTTTTTTTTTTTTTSTT. Disordered stretches follow at residues 31-57, 206-265, 340-612, 963-1051, 1201-1330, and 1342-1528; these read TSSL…HESN, QQQL…QKQN, PRPP…LKIE, NNIN…NENE, SSDD…SNPL, and ISKG…SNNT. The stretch at 259 to 307 forms a coiled coil; the sequence is KQQQKQNSQQQQQQQQQQQQQQQQQQQQQQQQQQQQQQQQQQQKLNIHE. 2 stretches are compositionally biased toward low complexity: residues 346–399 and 406–428; these read QQHQ…NITP and PSSV…KPTS. A compositionally biased stretch (polar residues) spans 429 to 444; the sequence is IGQIQSLHYHNPSLYQ. 2 stretches are compositionally biased toward low complexity: residues 450–461 and 475–536; these read NRNRGNNNNNNN and SSTV…NTPN. The span at 553-568 shows a compositional bias: gly residues; that stretch reads GGIGGGGGGGSGGGGI. Low complexity-rich tracts occupy residues 963–1048, 1201–1248, 1275–1284, 1299–1324, and 1346–1403; these read NNIN…TTTN, SSDD…TGGP, NSSNNNNTSS, SGSS…PTTG, and SPAS…SVST. Residues 1417 to 1441 are compositionally biased toward polar residues; it reads LNLSSVSKTGQASTSTPNLLNLKNI. Positions 1442–1478 are enriched in low complexity; sequence PTTTNNSNSTTTTTTTTPTGKPQFSLNLSSLSKSSSS. Residues 1479 to 1491 are compositionally biased toward polar residues; sequence TETVPPSQPNQPI. Low complexity predominate over residues 1509-1528; sequence STTTTTTTTTPPPINNSNNT. Positions 1730–2034 constitute a Protein kinase domain; sequence FKDLKRVAKG…TKFIAIKPTI (305 aa). ATP contacts are provided by residues 1736 to 1744 and lysine 1760; that span reads VAKGAYGTV. Aspartate 1858 functions as the Proton acceptor in the catalytic mechanism. The 142-residue stretch at 2130–2271 folds into the Tyrosine-protein phosphatase domain; sequence RPSKVASFMY…LCRWGKQRRN (142 aa). Residues 2379–2404 are disordered; sequence NINNNNNNNSNNSKSKQQQQQQQNQN.

This sequence belongs to the protein kinase superfamily. Ser/Thr protein kinase family.

The enzyme catalyses L-seryl-[protein] + ATP = O-phospho-L-seryl-[protein] + ADP + H(+). It carries out the reaction L-threonyl-[protein] + ATP = O-phospho-L-threonyl-[protein] + ADP + H(+). The polypeptide is Probable serine/threonine-protein kinase DDB_G0277071 (Dictyostelium discoideum (Social amoeba)).